The primary structure comprises 1774 residues: U3 small nucleolar RNA-associated protein 10 (1774 aa).

A disordered region spans residues 1206 to 1226 (YDKHSSAGSNDEEAGSESEAE). Residues 1215 to 1226 (NDEEAGSESEAE) are compositionally biased toward acidic residues. An HEAT repeat occupies 1734–1772 (LVPIIAELLEDEDEEVEYEVRSGLVKVVESVMGEPFDRY).

Belongs to the HEATR1/UTP10 family. As to quaternary structure, component of the ribosomal small subunit (SSU) processome.

It is found in the nucleus. Its subcellular location is the nucleolus. Its function is as follows. Involved in nucleolar processing of pre-18S ribosomal RNA. Involved in ribosome biosynthesis. In Kluyveromyces lactis (strain ATCC 8585 / CBS 2359 / DSM 70799 / NBRC 1267 / NRRL Y-1140 / WM37) (Yeast), this protein is U3 small nucleolar RNA-associated protein 10.